The chain runs to 879 residues: Band 4.1-like protein 1 (879 aa).

Residues 1 to 64 (MTTETGPDSE…RPAEQSLDME (64 aa)) are disordered. Residues 17–35 (ETPQQPEAAAAVTTPVTPA) show a composition bias toward low complexity. Thr30 is subject to Phosphothreonine. Residues 38–50 (SHPETNSNEKHLT) are compositionally biased toward basic and acidic residues. A Phosphoserine modification is found at Ser75. Thr79 bears the Phosphothreonine mark. Positions 97–378 (ATCRVTLLDA…EHHTFFRLVS (282 aa)) constitute an FERM domain. Tyr343 bears the Phosphotyrosine mark. Ser378, Ser430, Ser437, Ser461, and Ser466 each carry phosphoserine. Positions 428–501 (SRSLDGAEFS…HKQEFLDKPE (74 aa)) are disordered. Over residues 444–501 (ENHDAGPDGDKREDDAESGGRRSEAEEGEVRTPTKIKELKPEQETTPRHKQEFLDKPE) the composition is skewed to basic and acidic residues. Thr475 is subject to Phosphothreonine. Residues 483-541 (KPEQETTPRHKQEFLDKPEDVLLKHQASINELKRTLKEPNSKLIHRDRDWERERRLPSS) form a spectrin--actin-binding region. Ser510 is subject to Phosphoserine. Over residues 514–538 (LKRTLKEPNSKLIHRDRDWERERRL) the composition is skewed to basic and acidic residues. 3 disordered regions span residues 514–596 (LKRT…FLKD), 633–687 (FEDF…STPE), and 718–742 (SRVS…MTTP). Phosphoserine occurs at positions 540, 541, 544, and 546. Residue Thr550 is modified to Phosphothreonine. The span at 550 to 577 (TPEKASERAGLREGSEEKVKPPRPRAPE) shows a compositional bias: basic and acidic residues. 2 positions are modified to phosphoserine: Ser564 and Ser578. Position 580 is a phosphothreonine (Thr580). Phosphoserine is present on residues Glu583, Gln587, Ser639, Ser648, Ser650, Ser665, Ser666, Asp669, Ser671, Ser677, and Ser684. Basic and acidic residues predominate over residues 635–650 (DFSRSLPELDRDKSDS). Thr685 is subject to Phosphothreonine. Polar residues predominate over residues 718-728 (SRVSTADSTQV). Ser721, Pro742, Ala766, Ser782, and Ser868 each carry phosphoserine. Positions 744-879 (CITTETISTT…EERDKKPQES (136 aa)) are C-terminal (CTD).

In terms of assembly, interacts with AGAP2. As to expression, highest expression in brain, lower in heart and kidney. Within the brain, highest expression in cerebellum.

The protein resides in the cytoplasm. It localises to the cytoskeleton. In terms of biological role, may function to confer stability and plasticity to neuronal membrane via multiple interactions, including the spectrin-actin-based cytoskeleton, integral membrane channels and membrane-associated guanylate kinases. The sequence is that of Band 4.1-like protein 1 from Rattus norvegicus (Rat).